Reading from the N-terminus, the 407-residue chain is Elongation factor Tu (407 aa).

The tr-type G domain maps to 10–217 (KPHVNVGTIG…TLDTYIPDPE (208 aa)). The tract at residues 19 to 26 (GHVDHGKT) is G1. 19–26 (GHVDHGKT) provides a ligand contact to GTP. Thr-26 lines the Mg(2+) pocket. A G2 region spans residues 60 to 64 (GITIS). Positions 81 to 84 (DCPG) are G3. GTP-binding positions include 81 to 85 (DCPGH) and 136 to 139 (NKSD). Residues 136–139 (NKSD) form a G4 region. The segment at 184–186 (SAL) is G5.

It belongs to the TRAFAC class translation factor GTPase superfamily. Classic translation factor GTPase family. EF-Tu/EF-1A subfamily. Monomer.

The protein resides in the cytoplasm. The enzyme catalyses GTP + H2O = GDP + phosphate + H(+). Its function is as follows. GTP hydrolase that promotes the GTP-dependent binding of aminoacyl-tRNA to the A-site of ribosomes during protein biosynthesis. The protein is Elongation factor Tu of Marinomonas sp. (strain MWYL1).